Consider the following 155-residue polypeptide: Ribosome-binding factor A (155 aa).

Belongs to the RbfA family. In terms of assembly, monomer. Binds 30S ribosomal subunits, but not 50S ribosomal subunits or 70S ribosomes.

The protein localises to the cytoplasm. Functionally, one of several proteins that assist in the late maturation steps of the functional core of the 30S ribosomal subunit. Associates with free 30S ribosomal subunits (but not with 30S subunits that are part of 70S ribosomes or polysomes). Required for efficient processing of 16S rRNA. May interact with the 5'-terminal helix region of 16S rRNA. The sequence is that of Ribosome-binding factor A from Methylocella silvestris (strain DSM 15510 / CIP 108128 / LMG 27833 / NCIMB 13906 / BL2).